A 134-amino-acid chain; its full sequence is D-ribose pyranase (134 aa).

His-20 functions as the Proton donor in the catalytic mechanism. Residues Asp-28, His-101, and 123–125 contribute to the substrate site; that span reads YCN.

The protein belongs to the RbsD / FucU family. RbsD subfamily. In terms of assembly, homodecamer.

It is found in the cytoplasm. It carries out the reaction beta-D-ribopyranose = beta-D-ribofuranose. It functions in the pathway carbohydrate metabolism; D-ribose degradation; D-ribose 5-phosphate from beta-D-ribopyranose: step 1/2. In terms of biological role, catalyzes the interconversion of beta-pyran and beta-furan forms of D-ribose. This chain is D-ribose pyranase, found in Pseudomonas fluorescens (strain Pf0-1).